The following is a 389-amino-acid chain: COP9 signalosome complex subunit 11 (389 aa).

In terms of domain architecture, PCI spans 143-312; the sequence is QLIIDIPNLV…ILYQKFDPQM (170 aa).

Component of a COP9 signalosome-like (CSN) complex.

Its subcellular location is the cytoplasm. It localises to the nucleus. Functionally, component of the COP9 signalosome (CSN) complex that acts as an regulator of the ubiquitin (Ubl) conjugation pathway by mediating the deneddylation of the cullin subunit of SCF-type E3 ubiquitin-protein ligase complexes The CSN complex is involved in the regulation of the mating pheromone response. PCI8 may also be involved in transcriptional and translational control. The polypeptide is COP9 signalosome complex subunit 11 (PCI8) (Kluyveromyces lactis (strain ATCC 8585 / CBS 2359 / DSM 70799 / NBRC 1267 / NRRL Y-1140 / WM37) (Yeast)).